The primary structure comprises 703 residues: Elongation factor G (703 aa).

The region spanning 7 to 287 (KFTRNIGIAA…AVMRYLPSPA (281 aa)) is the tr-type G domain. GTP-binding positions include 16–23 (AHIDAGKT), 84–88 (DTPGH), and 138–141 (NKMD).

The protein belongs to the TRAFAC class translation factor GTPase superfamily. Classic translation factor GTPase family. EF-G/EF-2 subfamily.

The protein resides in the cytoplasm. In terms of biological role, catalyzes the GTP-dependent ribosomal translocation step during translation elongation. During this step, the ribosome changes from the pre-translocational (PRE) to the post-translocational (POST) state as the newly formed A-site-bound peptidyl-tRNA and P-site-bound deacylated tRNA move to the P and E sites, respectively. Catalyzes the coordinated movement of the two tRNA molecules, the mRNA and conformational changes in the ribosome. The sequence is that of Elongation factor G from Christiangramia forsetii (strain DSM 17595 / CGMCC 1.15422 / KT0803) (Gramella forsetii).